Reading from the N-terminus, the 245-residue chain is Octanoyltransferase (245 aa).

The BPL/LPL catalytic domain maps to 54 to 242 (QNAHEQVWLL…SFEQIFGPII (189 aa)). Substrate-binding positions include 93–100 (RGGEFTYH), 173–175 (AIG), and 186–188 (GVS). The Acyl-thioester intermediate role is filled by Cys204.

The protein belongs to the LipB family.

The protein localises to the cytoplasm. The catalysed reaction is octanoyl-[ACP] + L-lysyl-[protein] = N(6)-octanoyl-L-lysyl-[protein] + holo-[ACP] + H(+). It participates in protein modification; protein lipoylation via endogenous pathway; protein N(6)-(lipoyl)lysine from octanoyl-[acyl-carrier-protein]: step 1/2. Its function is as follows. Catalyzes the transfer of endogenously produced octanoic acid from octanoyl-acyl-carrier-protein onto the lipoyl domains of lipoate-dependent enzymes. Lipoyl-ACP can also act as a substrate although octanoyl-ACP is likely to be the physiological substrate. The protein is Octanoyltransferase of Bartonella henselae (strain ATCC 49882 / DSM 28221 / CCUG 30454 / Houston 1) (Rochalimaea henselae).